Here is a 141-residue protein sequence, read N- to C-terminus: Large ribosomal subunit protein uL11 (141 aa).

The protein belongs to the universal ribosomal protein uL11 family. As to quaternary structure, part of the ribosomal stalk of the 50S ribosomal subunit. Interacts with L10 and the large rRNA to form the base of the stalk. L10 forms an elongated spine to which L12 dimers bind in a sequential fashion forming a multimeric L10(L12)X complex. Post-translationally, one or more lysine residues are methylated.

In terms of biological role, forms part of the ribosomal stalk which helps the ribosome interact with GTP-bound translation factors. This chain is Large ribosomal subunit protein uL11, found in Chlorobium chlorochromatii (strain CaD3).